A 146-amino-acid chain; its full sequence is Large ribosomal subunit protein uL15 (146 aa).

Positions M1–R13 are enriched in basic and acidic residues. A disordered region spans residues M1 to G52. Gly residues-rich tracts occupy residues R21–A31 and S42–G52.

The protein belongs to the universal ribosomal protein uL15 family. Part of the 50S ribosomal subunit.

In terms of biological role, binds to the 23S rRNA. The sequence is that of Large ribosomal subunit protein uL15 from Bacillus anthracis (strain A0248).